A 393-amino-acid polypeptide reads, in one-letter code: Flap endonuclease 1 (393 aa).

Residues M1–A108 form an N-domain region. D34 contacts Mg(2+). R74 lines the DNA pocket. D90 is a binding site for Mg(2+). The span at S99–E120 shows a compositional bias: basic and acidic residues. Positions S99 to M127 are disordered. The I-domain stretch occupies residues A126–Y257. Positions 162, 164, 183, and 185 each coordinate Mg(2+). E162 is a binding site for DNA. Residues G235 and D237 each coordinate DNA. Residue D237 coordinates Mg(2+). The segment at T340–F348 is interaction with PCNA. A disordered region spans residues N358–K393. Residues S384–K393 show a composition bias toward basic residues.

Belongs to the XPG/RAD2 endonuclease family. FEN1 subfamily. Interacts with PCNA. Three molecules of FEN1 bind to one PCNA trimer with each molecule binding to one PCNA monomer. PCNA stimulates the nuclease activity without altering cleavage specificity. It depends on Mg(2+) as a cofactor. In terms of processing, phosphorylated. Phosphorylation upon DNA damage induces relocalization to the nuclear plasma.

The protein resides in the nucleus. It is found in the nucleolus. It localises to the nucleoplasm. The protein localises to the mitochondrion. Its function is as follows. Structure-specific nuclease with 5'-flap endonuclease and 5'-3' exonuclease activities involved in DNA replication and repair. During DNA replication, cleaves the 5'-overhanging flap structure that is generated by displacement synthesis when DNA polymerase encounters the 5'-end of a downstream Okazaki fragment. It enters the flap from the 5'-end and then tracks to cleave the flap base, leaving a nick for ligation. Also involved in the long patch base excision repair (LP-BER) pathway, by cleaving within the apurinic/apyrimidinic (AP) site-terminated flap. Acts as a genome stabilization factor that prevents flaps from equilibrating into structures that lead to duplications and deletions. Also possesses 5'-3' exonuclease activity on nicked or gapped double-stranded DNA, and exhibits RNase H activity. Also involved in replication and repair of rDNA and in repairing mitochondrial DNA. The protein is Flap endonuclease 1 of Trypanosoma brucei brucei (strain 927/4 GUTat10.1).